The sequence spans 442 residues: Vacuolar zinc transporter ZRC1 (442 aa).

The Cytoplasmic portion of the chain corresponds to 1–8 (MITGKELR). A helical transmembrane segment spans residues 9-29 (IISLLTLDTVFFLLEITIGYM). Residues 30 to 32 (SHS) are Vacuolar-facing. Residues 33-53 (LALIADSFHMLNDIISLLVAL) form a helical membrane-spanning segment. At 54-75 (WAVDVAKNRGPDAKYTYGWKRA) the chain is on the cytoplasmic side. The chain crosses the membrane as a helical span at residues 76–96 (EILGALINAVFLIALCFSIMI). Topologically, residues 97–112 (EALQRLIEPQEIQNPR) are vacuolar. Residues 113–133 (LVLYVGVAGLISNVVGLFLFH) form a helical membrane-spanning segment. Over 134–235 (DHGSDSLHSH…GHRSLNMHGV (102 aa)) the chain is Cytoplasmic. Short sequence motifs (histidine repeat) lie at residues 141–145 (HSHSH), 163–167 (HSHSH), and 216–220 (HDHSH). Disordered stretches follow at residues 141–170 (HSHSHGSVESGNNDLDIESNATHSHSHASL) and 208–227 (QPLLNHDDHDHSHESKKPGH). Positions 149-170 (ESGNNDLDIESNATHSHSHASL) are enriched in polar residues. Residues 212–224 (NHDDHDHSHESKK) are compositionally biased toward basic and acidic residues. The chain crosses the membrane as a helical span at residues 236 to 256 (FLHVLGDALGNIGVIAAALFI). The Vacuolar portion of the chain corresponds to 257–265 (WKTEYSWRY). The chain crosses the membrane as a helical span at residues 266–286 (YSDPIVSLIITIIIFSSALPL). The Cytoplasmic portion of the chain corresponds to 287 to 442 (SRRASRILLQ…AVNCNTSNCL (156 aa)). Residue lysine 357 forms a Glycyl lysine isopeptide (Lys-Gly) (interchain with G-Cter in ubiquitin) linkage. Residues serine 387, serine 393, and serine 397 each carry the phosphoserine modification. A disordered region spans residues 391–419 (GGSPSSSQEAFDSHGNTEHGRKKRSPTAY).

Belongs to the cation diffusion facilitator (CDF) transporter (TC 2.A.4) family. SLC30A subfamily.

It is found in the vacuole membrane. It carries out the reaction Zn(2+)(in) = Zn(2+)(out). In terms of biological role, vacuolar transporter that regulates zinc homeostasis by mediating zinc transport and storage into the vacuole. ZRC1 senses zinc availability in the cytosol, which might be performed through the histidine repeat motifs, and transports zinc from the cytosol to the vacuole if zinc in cytosol is abundant, conferring resistance to zinc toxicity. Plays a role in resistance to zinc shock resulting from sudden influx of zinc into cytoplasm when ZRT1 and ZRT2 are induced in response to zinc depletion. This Saccharomyces cerevisiae (strain ATCC 204508 / S288c) (Baker's yeast) protein is Vacuolar zinc transporter ZRC1.